We begin with the raw amino-acid sequence, 535 residues long: Protein PyrBI (535 aa).

The interval 1 to 341 (MENKFMGRSL…MIAGKIGDDY (341 aa)) is aspartate carbamoyltransferase. The segment at 342-370 (KGPEPKSCERVEDEDYIVEVPINNSKESK) is linker. Residues 371–535 (VETFSEGVRP…FKEIWGEKKN (165 aa)) are aspartate carbamoyltransferase regulatory region. Zn(2+)-binding residues include Cys488, Cys493, Cys517, and Cys520.

The protein in the N-terminal section; belongs to the aspartate/ornithine carbamoyltransferase superfamily. ATCase family. It in the C-terminal section; belongs to the PyrI family.

It catalyses the reaction carbamoyl phosphate + L-aspartate = N-carbamoyl-L-aspartate + phosphate + H(+). The protein operates within pyrimidine metabolism; UMP biosynthesis via de novo pathway; (S)-dihydroorotate from bicarbonate: step 2/3. The protein is Protein PyrBI (pyrBI) of Treponema denticola (strain ATCC 35405 / DSM 14222 / CIP 103919 / JCM 8153 / KCTC 15104).